The following is a 689-amino-acid chain: Protein asunder (689 aa).

A coiled-coil region spans residues 521 to 550 (NGARLKLSKAKDQYRLLYRELEQLIQLNAT). Residues 578–619 (GASLLRSYTESPLSPERLEPITSGSASGSSNSNSLLKASKRR) form a disordered region. Low complexity predominate over residues 600–614 (SGSASGSSNSNSLLK). A Nuclear localization signal (NLS) motif is present at residues 613-619 (LKASKRR).

The protein belongs to the Integrator subunit 13 family. In terms of assembly, belongs to the multiprotein complex Integrator, at least composed of IntS1, IntS2, IntS3, IntS4, omd/IntS5, IntS6, defl/IntS7, IntS8, IntS9, IntS10, IntS11, IntS12, asun/IntS13, IntS14 and IntS15. The core complex associates with protein phosphatase 2A subunits mts/PP2A and Pp2A-29B, to form the Integrator-PP2A (INTAC) complex. In terms of processing, phosphorylated.

The protein resides in the nucleus. The protein localises to the cytoplasm. It is found in the perinuclear region. Its function is as follows. Component of the integrator complex, a multiprotein complex that terminates RNA polymerase II (Pol II) transcription in the promoter-proximal region of genes. The integrator complex provides a quality checkpoint during transcription elongation by driving premature transcription termination of transcripts that are unfavorably configured for transcriptional elongation: the complex terminates transcription by (1) catalyzing dephosphorylation of the C-terminal domain (CTD) of Pol II subunit Polr2A/Rbp1 and Spt5, and (2) degrading the exiting nascent RNA transcript via endonuclease activity. The integrator complex is also involved in the 3'-end processing of the U7 snRNA, and also the spliceosomal snRNAs U1, U2, U4 and U5. The chain is Protein asunder (asun) from Drosophila erecta (Fruit fly).